The sequence spans 281 residues: MRSVQNSPIGVFDSGVGGLTVLRELYRQLPQESMLYFADTARLPYGNRSGAEILQYVREILVWMSQQNVKMVIMACNTSSALALDIVRSEFNFPILGVILPGARAAVKQGQRIGVISTPATAKSNAYRQAIQEINPKAQVWQVGCAEFVPLIEANRIHDPYTKQVAWKYLAPLLAQNIDTLVYGCTHYRHLSPIFQEIIPPTVNLIDPANFVVAAAKKELELMGLRHNEPPLPTRFAVSGCPQTFSQISQQWLGYYPLTEQVSLPMTINPSLVREELEILE.

Substrate contacts are provided by residues 13–14 (DS) and 45–46 (YG). The Proton donor/acceptor role is filled by Cys76. 77-78 (NT) contributes to the substrate binding site. Residue Cys185 is the Proton donor/acceptor of the active site. 186–187 (TH) contacts substrate.

Belongs to the aspartate/glutamate racemases family.

It carries out the reaction L-glutamate = D-glutamate. It participates in cell wall biogenesis; peptidoglycan biosynthesis. In terms of biological role, provides the (R)-glutamate required for cell wall biosynthesis. The polypeptide is Glutamate racemase (Rippkaea orientalis (strain PCC 8801 / RF-1) (Cyanothece sp. (strain PCC 8801))).